We begin with the raw amino-acid sequence, 433 residues long: Chaperone SurA (433 aa).

The signal sequence occupies residues 1-28; the sequence is MTAITRITLTGALLAAALLLAALQPARA. 2 consecutive PpiC domains span residues 174–277 and 286–386; these read NQEY…KLMD and VTET…QVTD.

The protein localises to the periplasm. It catalyses the reaction [protein]-peptidylproline (omega=180) = [protein]-peptidylproline (omega=0). In terms of biological role, chaperone involved in the correct folding and assembly of outer membrane proteins. Recognizes specific patterns of aromatic residues and the orientation of their side chains, which are found more frequently in integral outer membrane proteins. May act in both early periplasmic and late outer membrane-associated steps of protein maturation. In Alkalilimnicola ehrlichii (strain ATCC BAA-1101 / DSM 17681 / MLHE-1), this protein is Chaperone SurA.